The chain runs to 311 residues: MALPILLDCDPGHDDAIAIVLALASPELDVKAITSSAGNQTPEKTLRNVLRMLTLLNRTDIPVAGGAVKPLMRELIIADNVHGESGLDGPALPEPAFAPQNCTAVELMAKTLRESAEPITIVSTGPQTNVALLLNSHPELHSKIARIVIMGGAMGLGNWTPAAEFNIYVDPEAAEIVFQSGIPVVMAGLDVTHRAQIHVEDTERFRAIGNPVSTIVAELLDFFLEYHKDEKWGFVGAPLHDPCTIAWLLKPELFTTVERWVGVETQGKYTQGMTVVDYYYLTGNKPNATVMVDVDRQGFVDLLADRLKFYA.

His240 is an active-site residue.

Belongs to the IUNH family. RihA subfamily.

Its function is as follows. Hydrolyzes with equal efficiency cytidine or uridine to ribose and cytosine or uracil, respectively. The polypeptide is Pyrimidine-specific ribonucleoside hydrolase RihA (Escherichia coli O9:H4 (strain HS)).